The primary structure comprises 182 residues: Adenine phosphoribosyltransferase (182 aa).

It belongs to the purine/pyrimidine phosphoribosyltransferase family. In terms of assembly, homodimer.

It localises to the cytoplasm. The catalysed reaction is AMP + diphosphate = 5-phospho-alpha-D-ribose 1-diphosphate + adenine. It participates in purine metabolism; AMP biosynthesis via salvage pathway; AMP from adenine: step 1/1. Catalyzes a salvage reaction resulting in the formation of AMP, that is energically less costly than de novo synthesis. The chain is Adenine phosphoribosyltransferase from Campylobacter jejuni subsp. jejuni serotype O:23/36 (strain 81-176).